Consider the following 138-residue polypeptide: Putative pre-16S rRNA nuclease (138 aa).

It belongs to the YqgF nuclease family.

Its subcellular location is the cytoplasm. Its function is as follows. Could be a nuclease involved in processing of the 5'-end of pre-16S rRNA. This chain is Putative pre-16S rRNA nuclease, found in Salmonella schwarzengrund (strain CVM19633).